Here is a 240-residue protein sequence, read N- to C-terminus: Urease accessory protein UreF (240 aa).

This sequence belongs to the UreF family. In terms of assembly, ureD, UreF and UreG form a complex that acts as a GTP-hydrolysis-dependent molecular chaperone, activating the urease apoprotein by helping to assemble the nickel containing metallocenter of UreC. The UreE protein probably delivers the nickel.

Its subcellular location is the cytoplasm. Its function is as follows. Required for maturation of urease via the functional incorporation of the urease nickel metallocenter. This Rhodopseudomonas palustris (strain TIE-1) protein is Urease accessory protein UreF.